The following is a 518-amino-acid chain: Lysine 5,6-aminomutase alpha subunit (518 aa).

Pyridoxal 5'-phosphate-binding positions include 184–189 (RTTGQS), Ser238, Tyr263, Arg268, and Asn299.

It belongs to the KamD family. As to quaternary structure, heterotetramer of 2 alpha and 2 beta subunits. The cofactor is adenosylcob(III)alamin. Pyridoxal 5'-phosphate is required as a cofactor.

The catalysed reaction is (3S)-3,6-diaminohexanoate = (3S,5S)-3,5-diaminohexanoate. It carries out the reaction D-lysine = (2R,5S)-2,5-diaminohexanoate. It participates in amino-acid degradation; L-lysine degradation via acetate pathway. Functionally, catalyzes the migration of the L-beta-lysine and D-lysine epsilon amino group to the delta carbon to produce 3,5-diaminohexanoate and 2,5-diaminohexanoate, respectively. The sequence is that of Lysine 5,6-aminomutase alpha subunit from Fusobacterium nucleatum subsp. nucleatum (strain ATCC 25586 / DSM 15643 / BCRC 10681 / CIP 101130 / JCM 8532 / KCTC 2640 / LMG 13131 / VPI 4355).